The sequence spans 275 residues: Ribosomal RNA small subunit methyltransferase A (275 aa).

The S-adenosyl-L-methionine site is built by asparagine 21, leucine 23, glycine 48, glutamate 69, aspartate 94, and asparagine 115.

This sequence belongs to the class I-like SAM-binding methyltransferase superfamily. rRNA adenine N(6)-methyltransferase family. RsmA subfamily.

The protein localises to the cytoplasm. It carries out the reaction adenosine(1518)/adenosine(1519) in 16S rRNA + 4 S-adenosyl-L-methionine = N(6)-dimethyladenosine(1518)/N(6)-dimethyladenosine(1519) in 16S rRNA + 4 S-adenosyl-L-homocysteine + 4 H(+). Its function is as follows. Specifically dimethylates two adjacent adenosines (A1518 and A1519) in the loop of a conserved hairpin near the 3'-end of 16S rRNA in the 30S particle. May play a critical role in biogenesis of 30S subunits. The protein is Ribosomal RNA small subunit methyltransferase A of Clostridium botulinum (strain Okra / Type B1).